A 450-amino-acid polypeptide reads, in one-letter code: UDP-N-acetylmuramoylalanine--D-glutamate ligase (450 aa).

Position 119 to 125 (119 to 125 (GSNGKTT)) interacts with ATP.

This sequence belongs to the MurCDEF family.

It is found in the cytoplasm. It carries out the reaction UDP-N-acetyl-alpha-D-muramoyl-L-alanine + D-glutamate + ATP = UDP-N-acetyl-alpha-D-muramoyl-L-alanyl-D-glutamate + ADP + phosphate + H(+). Its pathway is cell wall biogenesis; peptidoglycan biosynthesis. Its function is as follows. Cell wall formation. Catalyzes the addition of glutamate to the nucleotide precursor UDP-N-acetylmuramoyl-L-alanine (UMA). The chain is UDP-N-acetylmuramoylalanine--D-glutamate ligase from Streptococcus pneumoniae (strain JJA).